We begin with the raw amino-acid sequence, 546 residues long: CCA tRNA nucleotidyltransferase, mitochondrial (546 aa).

This sequence belongs to the tRNA nucleotidyltransferase/poly(A) polymerase family.

The protein localises to the mitochondrion. It localises to the cytoplasm. The protein resides in the nucleus. It carries out the reaction a tRNA precursor + 2 CTP + ATP = a tRNA with a 3' CCA end + 3 diphosphate. Nucleotidyltransferase that catalyzes the addition and repair of the essential 3'-terminal CCA sequence in tRNAs, which is necessary for the attachment of amino acids to the 3' terminus of tRNA molecules, using CTP and ATP as substrates. tRNA 3'-terminal CCA addition is required both for tRNA processing and repair. Also involved in tRNA surveillance by mediating tandem CCA addition to generate a CCACCA at the 3' terminus of unstable tRNAs. While stable tRNAs receive only 3'-terminal CCA, unstable tRNAs are marked with CCACCA and rapidly degraded. The structural flexibility of RNA controls the choice between CCA versus CCACCA addition: following the first CCA addition cycle, nucleotide-binding to the active site triggers a clockwise screw motion, producing torque on the RNA. This ejects stable RNAs, whereas unstable RNAs are refolded while bound to the enzyme and subjected to a second CCA catalytic cycle. The polypeptide is CCA tRNA nucleotidyltransferase, mitochondrial (CCA1) (Saccharomyces cerevisiae (strain ATCC 204508 / S288c) (Baker's yeast)).